The sequence spans 161 residues: Nucleotide-binding protein amb3630 (161 aa).

It belongs to the YajQ family.

Its function is as follows. Nucleotide-binding protein. The polypeptide is Nucleotide-binding protein amb3630 (Paramagnetospirillum magneticum (strain ATCC 700264 / AMB-1) (Magnetospirillum magneticum)).